The primary structure comprises 453 residues: Oocyte zinc finger protein XlCOF6 (453 aa).

C2H2-type zinc fingers lie at residues 6 to 29, 67 to 89, 95 to 117, 123 to 145, 151 to 173, 179 to 201, 207 to 229, 235 to 257, 263 to 285, 291 to 313, 319 to 341, 375 to 397, 403 to 425, and 431 to 453; these read FICS…CGKH, FTCT…HKTH, FTCM…YKAH, VRCT…KRLH, FACT…QRTH, FTCT…RRTH, FTCT…QITH, FTCT…QRTH, and FTCT…RITH.

It belongs to the krueppel C2H2-type zinc-finger protein family.

The protein resides in the nucleus. In terms of biological role, may be involved in transcriptional regulation. In Xenopus laevis (African clawed frog), this protein is Oocyte zinc finger protein XlCOF6.